An 843-amino-acid chain; its full sequence is MADDQGRGRRRPLNEDDSSTSRGSGDGPRVKVFRGSSSGDPRADPRIEASRERRALEEAPRREGGPTERKPWGDQYDYLNTRPAELVSKKGTDGVPVMLQTNFFRLKTKPEWRIVHYHVEFEPSIENPRVRMGVLSNHANLLGSGYLFDGLQLFTTRKFEQEITVLSGKSKLDIEYKISIKFVGFISCAEPRFLQVLNLILRRSMKGLNLELVGRNLFDPRAKIEIREFKMELWPGYETSIRQHEKDILLGTEITHKVMRTETIYDIMRRCSHNPARHQDEVRVNVLDLIVLTDYNNRTYRINDVDFGQTPKSTFSCKGRDISFVEYYLTKYNIRIRDHNQPLLISKNRDKALKTNASELVVLIPELCRVTGLNAEMRSNFQLMRAMSSYTRMNPKQRTDRLRAFNHRLQNTPESVKVLRDWNMELDKNVTEVQGRIIGQQNIVFHNGKVPAGENADWQRHFRDQRMLTTPSDGLDRWAVIAPQRNSHELRTLLDSLYRAASGMGLRIRSPQEFIIYDDRTGTYVRAMDDCVRSDPKLILCLVPNDNAERYSSIKKRGYVDRAVPTQVVTLKTTKNRSLMSIATKIAIQLNCKLGYTPWMIELPLSGLMTIGFDIAKSTRDRKRAYGALIASMDLQQNSTYFSTVTECSAFDVLANTLWPMIAKALRQYQHEHRKLPSRIVFYRDGVSSGSLKQLFEFEVKDIIEKLKTEYARVQLSPPQLAYIVVTRSMNTRFFLNGQNPPPGTIVDDVITLPERYDFYLVSQQVRQGTVSPTSYNVLYSSMGLSPEKMQKLTYKMCHLYYNWSGTTRVPAVCQYAKKLATLVGTNLHSIPQNALEKKFYYL.

Positions 1 to 12 match the Nuclear localization signal motif; the sequence is MADDQGRGRRRP. Positions 1 to 76 are disordered; sequence MADDQGRGRR…TERKPWGDQY (76 aa). The interval 1 to 257 is interaction with CBX5 and papi; sequence MADDQGRGRR…ILLGTEITHK (257 aa). Symmetric dimethylarginine is present on residues R7, R9, R10, and R11. Over residues 41 to 72 the composition is skewed to basic and acidic residues; the sequence is PRADPRIEASRERRALEEAPRREGGPTERKPW. Positions 263-372 constitute a PAZ domain; that stretch reads TIYDIMRRCS…LIPELCRVTG (110 aa). Positions 538–829 constitute a Piwi domain; it reads LILCLVPNDN…LATLVGTNLH (292 aa). Q589 serves as a coordination point for Mg(2+). Residues D614 and D685 contribute to the active site. L843 lines the Mg(2+) pocket.

This sequence belongs to the argonaute family. Piwi subfamily. In the ovaries, part of a complex composed of at least Panx, nxf2, piwi and Nxt1. The complex is knowns as Panx-induced co-transcriptional silencing (PICTS) complex, Panx-nxf2-dependent TAP/p15 silencing (Pandas complex), SFiNX (silencing factor interacting nuclear export variant) or piwi-Panx-nxf2-p15 (PPNP) complex. Interacts with vas; this interaction is RNA-independent. Interacts with Dcr-1 and Fmr1; these interactions occur in polar granules. Interacts (via N-terminal region) with CBX5 (via chromoshadow domain). Forms a complex with Hsp83 and Hop; probably Hop mediates the interaction between piwi and Hsp83. Forms a complex with Yb body components armi and fs(1)Yb; this interaction is required for proper piRNA loading and nuclear localization of piwi. Interaction of Piwi and fs(1)Yb is likely to occur via armi. Interacts (via the N-terminal region when unmethylated or symmetrically methylated at Arg-10) with papi (via Tudor domain). Interacts with vret. Interacts with Panx. Interacts with arx. Interacts with Tudor-SN. Interacts with Nup358 (via N-terminus). Associates with the nuclear pore complex via interaction with Elys. Interacts with thoc5; the interaction might be partly RNA-mediated. Interacts with xmas-2. Symmetrically dimethylated, most likely by csul. Methylation at Arg-10 enhances binding to papi whereas methylation at Arg-7, Arg-9 or Arg-11 reduces binding affinity to papi. Post-translationally, phosphorylated on serine and tyrosine residues in an Hsp83-dependent manner. As to expression, expressed in ovaries (at protein level). Expressed somatically in ovariole terminal filament cells, epithelial sheath cells, cap cells and follicle cells (at protein level). Expressed in nurse cells and oocytes in developing egg chambers (at protein level). In embryos, accumulates in pole cells (at protein level). In larval and adult testis, expressed in a germinal proliferative center at the apical tip containing somatic hub cells and mitotically dividing germ stem cells (at protein level).

Its subcellular location is the cytoplasm. It localises to the nucleus. It is found in the nucleoplasm. The protein resides in the chromosome. In terms of biological role, acts via the piwi-interacting RNA (piRNA) metabolic process, which mediates the repression of transposable elements during meiosis by forming complexes composed of piRNAs and Piwi proteins and governs the methylation and subsequent repression of transposons. Directly binds piRNAs, a class of 24 to 30 nucleotide RNAs that are generated by a Dicer-independent mechanism and are primarily derived from transposons and other repeated sequence elements. In ovarian somatic cells, mediates silencing of transposable elements at the transcriptional level in a mael-dependent manner. Involved in silencing of long terminal repeat (LTR) retrotransposons in male germline. In testis, regulates spermatogenesis together with Tudor-SN. In germ cells, mediates silencing at both transcriptional and post-transcriptional levels and is involved in the maintenance of populations of primary and secondary piRNAs. Piwi-mediated transcriptional silencing is accompanied by the formation of His3 trimethylated on 'Lys-10' (H3K9me3) associated euchromatin and heterochromatin. In ovary, associates predominantly with antisense piRNAs that contain uridine at their 5' end. Association with sense piRNAs is also observed but to a lesser extent. Mediates a somatic signaling mechanism required for the maintenance of germline stem cells to produce and maintain a daughter germline stem cell. It is not essential for the further differentiation of the committed daughter cell. Acts cell autonomously to promote germline stem cell division. Its role in stem cell maintenance does not seem to require nuclear localization. Required maternally for the posterior localization of osk and vas and for pole cell formation during oogenesis and early embryogenesis. Together with Hop and Hsp83, mediates canalization, also known as developmental robustness, likely via epigenetic silencing of existing genetic variants and suppression of transposon-induced new genetic variation. Shows RNA cleavage activity, although is not required for any of its known functions. In the ovaries, forms a complex with nxf2, Panx and Nxt1 which acts as effectors of cotranscriptional transposon silencing. The sequence is that of Protein piwi from Drosophila melanogaster (Fruit fly).